Reading from the N-terminus, the 497-residue chain is Cysteine--tRNA ligase (497 aa).

Cysteine 32 serves as a coordination point for Zn(2+). The 'HIGH' region motif lies at 34-44 (PTVYGEGHLGH). Residues cysteine 228, histidine 253, and glutamate 257 each coordinate Zn(2+). The short motif at 285–289 (KMGKS) is the 'KMSKS' region element. Lysine 288 provides a ligand contact to ATP.

This sequence belongs to the class-I aminoacyl-tRNA synthetase family. In terms of assembly, monomer. Requires Zn(2+) as cofactor.

It is found in the cytoplasm. The enzyme catalyses tRNA(Cys) + L-cysteine + ATP = L-cysteinyl-tRNA(Cys) + AMP + diphosphate. The polypeptide is Cysteine--tRNA ligase (Cytophaga hutchinsonii (strain ATCC 33406 / DSM 1761 / CIP 103989 / NBRC 15051 / NCIMB 9469 / D465)).